Here is a 99-residue protein sequence, read N- to C-terminus: Ubiquitin-related modifier 1 (99 aa).

Position 99 is a 1-thioglycine (G99). G99 is covalently cross-linked (Glycyl lysine isopeptide (Gly-Lys) (interchain with K-? in acceptor proteins)).

It belongs to the URM1 family. As to quaternary structure, homodimer; homodimerization may provide an autoprotection to the highly active C-terminal residue before attacking its substrates. Interacts with NCS2 and NCS6. Forms a conjugate with the target protein AHP1. In terms of processing, C-terminal thiocarboxylation occurs in 2 steps, it is first acyl-adenylated (-COAMP) via the hesA/moeB/thiF part of UBA4, then thiocarboxylated (-COSH) via the rhodanese domain of UBA4.

It is found in the cytoplasm. It localises to the nucleus. It functions in the pathway tRNA modification; 5-methoxycarbonylmethyl-2-thiouridine-tRNA biosynthesis. Its function is as follows. Acts as a sulfur carrier required for 2-thiolation of mcm(5)S(2)U at tRNA wobble positions of cytosolic tRNA(Lys), tRNA(Glu) and tRNA(Gln). Serves as sulfur donor in tRNA 2-thiolation reaction by being thiocarboxylated (-COSH) at its C-terminus by the MOCS3 homolog UBA4. The sulfur is then transferred to tRNA to form 2-thiolation of mcm(5)S(2)U. Prior mcm(5) tRNA modification by the elongator complex is required for 2-thiolation. Also acts as a ubiquitin-like protein (UBL) that is covalently conjugated via an isopeptide bond to lysine residues of target proteins such as AHP1. The thiocarboxylated form serves as substrate for conjugation and oxidative stress specifically induces the formation of UBL-protein conjugates. The sequence is that of Ubiquitin-related modifier 1 from Saccharomyces cerevisiae (strain RM11-1a) (Baker's yeast).